Here is a 284-residue protein sequence, read N- to C-terminus: Cell division protein DivIB (284 aa).

The span at 1-10 (MAWLRKKEQQ) shows a compositional bias: basic and acidic residues. A disordered region spans residues 1–38 (MAWLRKKEQQSDPLTPWQQYQARQQQTPRHDRRQKPKL). The Cytoplasmic portion of the chain corresponds to 1–56 (MAWLRKKEQQSDPLTPWQQYQARQQQTPRHDRRQKPKLDVNLPKIQTLRRRKLVKN). Residues 57-77 (LVLILLPLLLLLGVFGYFASP) traverse the membrane as a helical segment. Residues 78 to 284 (LSKVGLVSVQ…YSSSEKSSND (207 aa)) lie on the Extracellular side of the membrane. One can recognise a POTRA domain in the interval 79-150 (SKVGLVSVQG…NRIIIKTSEY (72 aa)).

Belongs to the FtsQ/DivIB family. DivIB subfamily.

The protein localises to the cell membrane. Functionally, cell division protein that may be involved in stabilizing or promoting the assembly of the division complex. The polypeptide is Cell division protein DivIB (Lacticaseibacillus rhamnosus (strain ATCC 53103 / LMG 18243 / GG) (Lactobacillus rhamnosus)).